Consider the following 130-residue polypeptide: Small ribosomal subunit protein uS13 (130 aa).

The span at 97–116 shows a compositional bias: basic residues; sequence PVRGQRTKTNARTRRGKRKT. The disordered stretch occupies residues 97 to 130; it reads PVRGQRTKTNARTRRGKRKTVGAGKSTSSIKRVK. The span at 121 to 130 shows a compositional bias: polar residues; that stretch reads KSTSSIKRVK.

The protein belongs to the universal ribosomal protein uS13 family. As to quaternary structure, part of the 30S ribosomal subunit. Forms a loose heterodimer with protein S19. Forms two bridges to the 50S subunit in the 70S ribosome.

Functionally, located at the top of the head of the 30S subunit, it contacts several helices of the 16S rRNA. In the 70S ribosome it contacts the 23S rRNA (bridge B1a) and protein L5 of the 50S subunit (bridge B1b), connecting the 2 subunits; these bridges are implicated in subunit movement. Contacts the tRNAs in the A and P-sites. This chain is Small ribosomal subunit protein uS13, found in Endomicrobium trichonymphae.